The sequence spans 298 residues: GTPase Era (298 aa).

The Era-type G domain occupies 3–170 (KSGFVAILGR…VQLLKDNLEE (168 aa)). A G1 region spans residues 11 to 18 (GRPNVGKS). 11-18 (GRPNVGKS) is a GTP binding site. The tract at residues 37–41 (QSTRN) is G2. The segment at 58–61 (DTPG) is G3. Residues 58-62 (DTPGI) and 120-123 (NKID) each bind GTP. Residues 120 to 123 (NKID) form a G4 region. Residues 149–151 (ISA) are G5. The KH type-2 domain occupies 201-279 (TQQEVPHSVA…YLETWVKVKK (79 aa)).

This sequence belongs to the TRAFAC class TrmE-Era-EngA-EngB-Septin-like GTPase superfamily. Era GTPase family. In terms of assembly, monomer.

The protein localises to the cytoplasm. It is found in the cell membrane. An essential GTPase that binds both GDP and GTP, with rapid nucleotide exchange. Plays a role in 16S rRNA processing and 30S ribosomal subunit biogenesis and possibly also in cell cycle regulation and energy metabolism. The chain is GTPase Era from Streptococcus equi subsp. zooepidemicus (strain H70).